A 183-amino-acid polypeptide reads, in one-letter code: Large ribosomal subunit protein uL5 (183 aa).

The protein belongs to the universal ribosomal protein uL5 family. As to quaternary structure, part of the 50S ribosomal subunit; part of the 5S rRNA/L5/L18/L25 subcomplex. Contacts the 5S rRNA and the P site tRNA. Forms a bridge to the 30S subunit in the 70S ribosome.

Its function is as follows. This is one of the proteins that bind and probably mediate the attachment of the 5S RNA into the large ribosomal subunit, where it forms part of the central protuberance. In the 70S ribosome it contacts protein S13 of the 30S subunit (bridge B1b), connecting the 2 subunits; this bridge is implicated in subunit movement. Contacts the P site tRNA; the 5S rRNA and some of its associated proteins might help stabilize positioning of ribosome-bound tRNAs. In Corynebacterium aurimucosum (strain ATCC 700975 / DSM 44827 / CIP 107346 / CN-1) (Corynebacterium nigricans), this protein is Large ribosomal subunit protein uL5.